A 504-amino-acid chain; its full sequence is Probable cytochrome P450 513F1 (504 aa).

The helical transmembrane segment at M1–I21 threads the bilayer. C449 lines the heme pocket.

It belongs to the cytochrome P450 family. It depends on heme as a cofactor.

The protein localises to the membrane. This Dictyostelium discoideum (Social amoeba) protein is Probable cytochrome P450 513F1 (cyp513F1).